The sequence spans 385 residues: Glutamate 5-kinase (385 aa).

Lys17 is an ATP binding site. 3 residues coordinate substrate: Ser64, Asp151, and Asn165. 185–186 (SD) is an ATP binding site. Residues 291 to 367 (SGTVRVDAGA…NQIDNILGYN (77 aa)) enclose the PUA domain.

The protein belongs to the glutamate 5-kinase family.

Its subcellular location is the cytoplasm. It carries out the reaction L-glutamate + ATP = L-glutamyl 5-phosphate + ADP. Its pathway is amino-acid biosynthesis; L-proline biosynthesis; L-glutamate 5-semialdehyde from L-glutamate: step 1/2. Its function is as follows. Catalyzes the transfer of a phosphate group to glutamate to form L-glutamate 5-phosphate. This Methanosarcina acetivorans (strain ATCC 35395 / DSM 2834 / JCM 12185 / C2A) protein is Glutamate 5-kinase.